A 418-amino-acid chain; its full sequence is MFRRLLIATVVGILAAFAVAGFRHAMLLLEWLFLNNDSGSLVNAATNLSPWRRLLTPALGGLAAGLLLMGWQKFTQQRPHAPTDYMEALQTDGQFDYAASLVKSLASLLVVTSGSAIGREGAMILLAALAASCFAQRFTPRQEWKLWIACGAAAGMAAAYRAPLAGSLFIAEVLFGTMMLASLGPVIISAVVALLVSNLINHSDALLYNVQLSVTVQARDYALIISTGVLAGLCGPLLLTLMNACHRGFVSLKLAPPCQLALGGLIVGLLSLFTPAVWGNGYSTVQSFLTAPPLLMIIAGIFLCKLCAVLASSGSGAPGGVFTPTLFIGLAIGMLYGRSLGLWFPDGEEITLLLGLTGMATLLAATTHAPIMSTLMICEMTGEYQLLPGLLIACVIASVISRTLHRDSIYRQHTAQHS.

Helical transmembrane passes span 5 to 25, 54 to 74, 146 to 166, 168 to 188, 222 to 242, 260 to 280, 291 to 311, 316 to 336, 352 to 372, and 380 to 400; these read LLIATVVGILAAFAVAGFRHA, LLTPALGGLAAGLLLMGWQKF, LWIACGAAAGMAAAYRAPLAG, LFIAEVLFGTMMLASLGPVII, ALIISTGVLAGLCGPLLLTLM, LALGGLIVGLLSLFTPAVWGN, APPLLMIIAGIFLCKLCAVLA, GAPGGVFTPTLFIGLAIGMLY, LLLGLTGMATLLAATTHAPIM, and MTGEYQLLPGLLIACVIASVI.

This sequence belongs to the chloride channel (TC 2.A.49) family. ClcB subfamily.

It localises to the cell inner membrane. In terms of biological role, probably acts as an electrical shunt for an outwardly-directed proton pump that is linked to amino acid decarboxylation, as part of the extreme acid resistance (XAR) response. In Escherichia coli O9:H4 (strain HS), this protein is Voltage-gated ClC-type chloride channel ClcB.